The chain runs to 406 residues: Tyrosine--tRNA ligase (406 aa).

Tyr-35 serves as a coordination point for L-tyrosine. The 'HIGH' region motif lies at 40–49; the sequence is PTADSLHVGH. The L-tyrosine site is built by Tyr-168 and Gln-172. A 'KMSKS' region motif is present at residues 228 to 232; it reads KMGKT. ATP is bound at residue Lys-231. In terms of domain architecture, S4 RNA-binding spans 340-404; the sequence is LPILDVMAST…RGKKNYNKIE (65 aa).

This sequence belongs to the class-I aminoacyl-tRNA synthetase family. TyrS type 1 subfamily. In terms of assembly, homodimer.

It localises to the cytoplasm. It catalyses the reaction tRNA(Tyr) + L-tyrosine + ATP = L-tyrosyl-tRNA(Tyr) + AMP + diphosphate + H(+). Catalyzes the attachment of tyrosine to tRNA(Tyr) in a two-step reaction: tyrosine is first activated by ATP to form Tyr-AMP and then transferred to the acceptor end of tRNA(Tyr). This chain is Tyrosine--tRNA ligase, found in Clostridium beijerinckii (strain ATCC 51743 / NCIMB 8052) (Clostridium acetobutylicum).